We begin with the raw amino-acid sequence, 330 residues long: Aspartate--ammonia ligase (330 aa).

It belongs to the class-II aminoacyl-tRNA synthetase family. AsnA subfamily. As to quaternary structure, homodimer.

It localises to the cytoplasm. The enzyme catalyses L-aspartate + NH4(+) + ATP = L-asparagine + AMP + diphosphate + H(+). Its pathway is amino-acid biosynthesis; L-asparagine biosynthesis; L-asparagine from L-aspartate (ammonia route): step 1/1. This is Aspartate--ammonia ligase from Salmonella typhimurium (strain LT2 / SGSC1412 / ATCC 700720).